A 371-amino-acid chain; its full sequence is Chaperone protein DnaJ (371 aa).

In terms of domain architecture, J spans 5-69 (DYYEVLGLSK…QKRAQYDQFG (65 aa)). The CR-type zinc-finger motif lies at 133–215 (GKELNVEIPV…CHGSGKVRKR (83 aa)). Residues Cys-146, Cys-149, Cys-163, Cys-166, Cys-189, Cys-192, Cys-203, and Cys-206 each coordinate Zn(2+). 4 CXXCXGXG motif repeats span residues 146 to 153 (CDTCKGSG), 163 to 170 (CKHCSGSG), 189 to 196 (CSHCSGTG), and 203 to 210 (CTTCHGSG).

It belongs to the DnaJ family. In terms of assembly, homodimer. Requires Zn(2+) as cofactor.

The protein localises to the cytoplasm. Its function is as follows. Participates actively in the response to hyperosmotic and heat shock by preventing the aggregation of stress-denatured proteins and by disaggregating proteins, also in an autonomous, DnaK-independent fashion. Unfolded proteins bind initially to DnaJ; upon interaction with the DnaJ-bound protein, DnaK hydrolyzes its bound ATP, resulting in the formation of a stable complex. GrpE releases ADP from DnaK; ATP binding to DnaK triggers the release of the substrate protein, thus completing the reaction cycle. Several rounds of ATP-dependent interactions between DnaJ, DnaK and GrpE are required for fully efficient folding. Also involved, together with DnaK and GrpE, in the DNA replication of plasmids through activation of initiation proteins. In Bacillus cereus (strain 03BB102), this protein is Chaperone protein DnaJ.